The primary structure comprises 193 residues: Putative RNA methyltransferase At5g10620 (193 aa).

S-adenosyl-L-methionine is bound by residues leucine 110, glycine 142, and 161–166 (LSSMVL).

Belongs to the RNA methyltransferase RlmH family.

The sequence is that of Putative RNA methyltransferase At5g10620 from Arabidopsis thaliana (Mouse-ear cress).